A 404-amino-acid polypeptide reads, in one-letter code: Neutral protease 2 homolog AFLA_065450 (404 aa).

Positions 1–19 are cleaved as a signal peptide; it reads MRFISASSLLLALAPTLNA. Positions 20–185 are excised as a propeptide; the sequence is VPVEVAGSAQ…TQAVKILERR (166 aa). Intrachain disulfides connect cysteine 191-cysteine 263 and cysteine 270-cysteine 288. Residue histidine 313 participates in Zn(2+) binding. Glutamate 314 is an active-site residue. Zn(2+)-binding residues include histidine 317 and aspartate 328.

This sequence belongs to the peptidase M35 family. It depends on Zn(2+) as a cofactor.

It localises to the secreted. The enzyme catalyses Preferential cleavage of bonds with hydrophobic residues in P1'. Also 3-Asn-|-Gln-4 and 8-Gly-|-Ser-9 bonds in insulin B chain.. Its function is as follows. Secreted metalloproteinase that allows assimilation of proteinaceous substrates. Shows high activities on basic nuclear substrates such as histone and protamine. The protein is Neutral protease 2 homolog AFLA_065450 of Aspergillus flavus (strain ATCC 200026 / FGSC A1120 / IAM 13836 / NRRL 3357 / JCM 12722 / SRRC 167).